We begin with the raw amino-acid sequence, 1314 residues long: E3 ubiquitin-protein ligase RNF123 (1314 aa).

Ala-2 is modified (N-acetylalanine). The B30.2/SPRY domain maps to 74–254 (VDSEDEESQG…VAFNFGSRPL (181 aa)). A disordered region spans residues 460–481 (HRSSREGKDSAEDRAEAAEERP). Residues 462–481 (SSREGKDSAEDRAEAAEERP) are compositionally biased toward basic and acidic residues. Ser-675 is modified (phosphoserine). At Arg-683 the chain carries Asymmetric dimethylarginine. An interaction with NFKB1 region spans residues 968 to 974 (WILVRLW). 8 residues coordinate Zn(2+): Cys-1254, Cys-1257, Cys-1269, His-1271, Cys-1274, Cys-1277, Cys-1288, and Cys-1291. Residues 1254-1292 (CPICYAHPISAVFQPCGHKSCKACIDQHLMNNKDCFFCK) form an RING-type zinc finger.

As to quaternary structure, component of the KPC complex composed of RNF123/KPC1 and UBAC1/KPC2. Interacts with UBAC1 and CDKN1B via its N-terminal domain. Interacts with RIGI (via N-terminus) and IFIH1 (via N-terminus). Post-translationally, ubiquitinated, leading to its degradation. Deubiquitinated by USP19, thereby stimulating CDKN1B ubiquitin-dependent degradation.

Its subcellular location is the cytoplasm. It carries out the reaction S-ubiquitinyl-[E2 ubiquitin-conjugating enzyme]-L-cysteine + [acceptor protein]-L-lysine = [E2 ubiquitin-conjugating enzyme]-L-cysteine + N(6)-ubiquitinyl-[acceptor protein]-L-lysine.. It participates in protein modification; protein ubiquitination. Its function is as follows. Catalytic subunit of the KPC complex that acts as E3 ubiquitin-protein ligase. Promotes the ubiquitination and proteasome-mediated degradation of CDKN1B which is the cyclin-dependent kinase inhibitor at the G0-G1 transition of the cell cycle. Also acts as a key regulator of the NF-kappa-B signaling by promoting maturation of the NFKB1 component of NF-kappa-B. Acts by catalyzing ubiquitination of the NFKB1 p105 precursor, leading to limited proteasomal degradation of NFKB1 p105 and generation of the active NFKB1 p50 subunit. Functions also as an inhibitor of innate antiviral signaling mediated by RIGI and IFIH1 independently of its E3 ligase activity. Interacts with the N-terminal CARD domains of RIGI and IFIH1 and competes with the downstream adapter MAVS. The chain is E3 ubiquitin-protein ligase RNF123 from Oryctolagus cuniculus (Rabbit).